A 158-amino-acid chain; its full sequence is Transcription elongation factor GreA (158 aa).

It belongs to the GreA/GreB family.

In terms of biological role, necessary for efficient RNA polymerase transcription elongation past template-encoded arresting sites. The arresting sites in DNA have the property of trapping a certain fraction of elongating RNA polymerases that pass through, resulting in locked ternary complexes. Cleavage of the nascent transcript by cleavage factors such as GreA or GreB allows the resumption of elongation from the new 3'terminus. GreA releases sequences of 2 to 3 nucleotides. The sequence is that of Transcription elongation factor GreA from Psychrobacter sp. (strain PRwf-1).